Consider the following 209-residue polypeptide: Orotate phosphoribosyltransferase (209 aa).

Residues R96, K100, H102, and 122 to 130 (EDLISTGGS) contribute to the 5-phospho-alpha-D-ribose 1-diphosphate site. S126 provides a ligand contact to orotate.

This sequence belongs to the purine/pyrimidine phosphoribosyltransferase family. PyrE subfamily. Homodimer. Requires Mg(2+) as cofactor.

The enzyme catalyses orotidine 5'-phosphate + diphosphate = orotate + 5-phospho-alpha-D-ribose 1-diphosphate. It participates in pyrimidine metabolism; UMP biosynthesis via de novo pathway; UMP from orotate: step 1/2. Functionally, catalyzes the transfer of a ribosyl phosphate group from 5-phosphoribose 1-diphosphate to orotate, leading to the formation of orotidine monophosphate (OMP). The chain is Orotate phosphoribosyltransferase from Lactococcus lactis subsp. cremoris (strain MG1363).